The following is a 267-amino-acid chain: Glutamate 5-kinase (267 aa).

Lys-14 provides a ligand contact to ATP. Residues Ser-54, Asp-141, and Asn-157 each contribute to the substrate site. Residues 177–178 and 219–225 each bind ATP; these read SD and TGGMMSK.

The protein belongs to the glutamate 5-kinase family.

The protein localises to the cytoplasm. It catalyses the reaction L-glutamate + ATP = L-glutamyl 5-phosphate + ADP. It participates in amino-acid biosynthesis; L-proline biosynthesis; L-glutamate 5-semialdehyde from L-glutamate: step 1/2. In terms of biological role, catalyzes the transfer of a phosphate group to glutamate to form L-glutamate 5-phosphate. This chain is Glutamate 5-kinase, found in Streptococcus thermophilus (strain CNRZ 1066).